The following is a 598-amino-acid chain: Aspartate--tRNA(Asp/Asn) ligase (598 aa).

An L-aspartate-binding site is contributed by E182. Residues Q206–K209 are aspartate. R228 is an L-aspartate binding site. ATP is bound by residues R228–E230 and Q237. An L-aspartate-binding site is contributed by H456. An ATP-binding site is contributed by E490. R497 contacts L-aspartate. G542–R545 lines the ATP pocket.

This sequence belongs to the class-II aminoacyl-tRNA synthetase family. Type 1 subfamily. Homodimer.

It is found in the cytoplasm. It carries out the reaction tRNA(Asx) + L-aspartate + ATP = L-aspartyl-tRNA(Asx) + AMP + diphosphate. In terms of biological role, aspartyl-tRNA synthetase with relaxed tRNA specificity since it is able to aspartylate not only its cognate tRNA(Asp) but also tRNA(Asn). Reaction proceeds in two steps: L-aspartate is first activated by ATP to form Asp-AMP and then transferred to the acceptor end of tRNA(Asp/Asn). This Lachnoclostridium phytofermentans (strain ATCC 700394 / DSM 18823 / ISDg) (Clostridium phytofermentans) protein is Aspartate--tRNA(Asp/Asn) ligase.